Consider the following 551-residue polypeptide: MEGVGLRAVGSHCSLSEMDDLDLTRALDKPRLKIERKRSFDERSMSELSTGYSRHDGIHDSPRGRSVLDTPLSSARNSFEPHPMMAEAWEALRRSMVFFRGQPVGTLAAVDNTTDEVLNYDQVFVRDFVPSALAFLMNGEPDIVKHFLLKTLQLQGWEKRVDRFKLGEGVMPASFKVLHDPIRETDNIVADFGESAIGRVAPVDSGFWWIILLRAYTKSTGDLTLSETPECQKGMKLILSLCLAEGFDTFPTLLCADGCSMIDRRMGVYGYPIEIQALFFMALRSALSMLKPDGDGREVIERIVKRLHALSFHMRNYFWLDHQNLNDIYRFKTEEYSHTAVNKFNVMPDSIPEWVFDFMPLRGGYFVGNVGPAHMDFRWFALGNCVSILSSLATPDQSMAIMDLLEHRWAELVGEMPLKICYPCLEGHEWRIVTGCDPKNTRWSYHNGGSWPVLLWQLTAACIKTGRPQIARRAVDLIESRLHRDCWPEYYDGKLGRYVGKQARKYQTWSIAGYLVAKMLLEDPSHIGMISLEEDKLMKPVIKRSASWPQL.

The residue at position 1 (Met-1) is an N-acetylmethionine. Residues Ser-11, Ser-14, Ser-44, and Ser-61 each carry the phosphoserine modification. The interval 50 to 74 (TGYSRHDGIHDSPRGRSVLDTPLSS) is disordered. Over residues 53–63 (SRHDGIHDSPR) the composition is skewed to basic and acidic residues. Phosphothreonine is present on Thr-70. Ser-547 bears the Phosphoserine mark.

The protein belongs to the glycosyl hydrolase 100 family. As to quaternary structure, forms homohexamers. Interacts with PIP5K9. Interaction with PIP5K9 represses CINV1 activity. Interacts with GRF1, GRF2, GRF3, GRF4, GRF5, GRF6, GRF7, GRF8 and GRF10; these interactions are dependent of the phosphorylation at Ser-547. Phosphorylated at Ser-547 by CPK3 and CPK21. In terms of tissue distribution, expressed in radicle, hypocotyls, root tips and vascular cylinder, leaf vasculature, shoot stipules, trichomes, stem, stigma apex and base of siliques.

Its subcellular location is the cytoplasm. It is found in the cytosol. It localises to the nucleus. It catalyses the reaction Hydrolysis of terminal non-reducing beta-D-fructofuranoside residues in beta-D-fructofuranosides.. In terms of biological role, cytosolic invertase that specifically cleaves sucrose into glucose and fructose and is involved in the regulation of multiple tissue development including primary root elongation, root hair growth, leaf and silique development, and floral transition. Is involved in osmotic stress-induced inhibition on lateral root growth by controlling the concentration of hexose in cells. May regulate sugar-mediated root development by controlling sucrose catabolism in root cells. Contributes to carbon partitioning and cellulose biosynthesis in seedlings. In Arabidopsis thaliana (Mouse-ear cress), this protein is Alkaline/neutral invertase CINV1.